Consider the following 786-residue polypeptide: MKKRIPTLLATMIASALYSHQGLAADLASQCMLGVPSYDRPLVKGDTNDLPVTINADNAKGNYPNDAVFTGNVDIMQGNSRLQADEVQLHQKQAEGQPEPVRTVDALGNVHYDDNQVILKGPKGWANLNTKDTNVWEGDYQMVGRQGRGKADLMKQRGENRYTILENGSFTSCLPGSDTWSVVGSEVIHDREEQVAEIWNARFKVGPVPIFYSPYLQLPVGDKRRSGFLIPNAKYTTKNYFEFYLPYYWNIAPNMDATITPHYMHRRGNIMWENEFRYLTQAGAGLMELDYLPSDKVYEDDHPKEGDKHRWLFYWQHSGVMDQVWRFNVDYTKVSDSSYFNDFDSKYGSSTDGYATQKFSVGYAVQNFDATVSTKQFQVFNDQNTSSYSAEPQLDVNYYHNDLGPFDTRIYGQAVHFVNTKDNMPEATRVHLEPTINLPLSNRWGSLNTEAKLMATHYQQTNLDSYNSDPNNKNKLEDSVNRVMPQFKVDGKLIFERDMAMLAPGYTQTLEPRVQYLYVPYRDQSGIYNYDSSLLQSDYNGLFRDRTYGGLDRIASANQVTTGVTTRIYDDAAVERFNVSVGQIYYFTESRTGDDNIKWENDDKTGSLVWAGDTYWRISERWGLRSGVQYDTRLDSVATSSSSLEYRRDQDRLVQLNYRYASPEYIQATLPSYYSTAEQYKNGINQVGAVASWLIADRWSIVGAYYFDTNSSKPADQMLGLQYNSCCYAIRVGYERKLNGWDNDKQHAIYDNAIGFNIELRGLSSNYGLGTQEMLRSNILPYQSSM.

A signal peptide spans 1 to 24 (MKKRIPTLLATMIASALYSHQGLA). 2 disulfides stabilise this stretch: Cys-31–Cys-726 and Cys-173–Cys-727.

The protein belongs to the LptD family. Component of the lipopolysaccharide transport and assembly complex. Interacts with LptE and LptA. Contains two intramolecular disulfide bonds.

It localises to the cell outer membrane. Functionally, together with LptE, is involved in the assembly of lipopolysaccharide (LPS) at the surface of the outer membrane. This is LPS-assembly protein LptD from Salmonella choleraesuis (strain SC-B67).